The sequence spans 267 residues: Alpha carbonic anhydrase 4 (267 aa).

Residues 1–26 form the signal peptide; the sequence is MDTNAKTIFFMAMCFIYLSFPNISHA. The N-linked (GlcNAc...) asparagine glycan is linked to Asn22. An Alpha-carbonic anhydrase domain is found at 34–264; sequence TPFTYEQKTE…SKGRSVWFYD (231 aa). The cysteines at positions 59 and 214 are disulfide-linked. Residue His99 is the Proton acceptor of the active site. His125 and His127 together coordinate Zn(2+). Asn135 is a glycosylation site (N-linked (GlcNAc...) asparagine). His144 is a Zn(2+) binding site. 210–211 serves as a coordination point for substrate; sequence TV.

The protein belongs to the alpha-class carbonic anhydrase family. It depends on Zn(2+) as a cofactor. Post-translationally, N-glycosylated.

The protein resides in the plastid. It localises to the chloroplast stroma. The enzyme catalyses hydrogencarbonate + H(+) = CO2 + H2O. In terms of biological role, reversible hydration of carbon dioxide. The polypeptide is Alpha carbonic anhydrase 4 (ACA4) (Arabidopsis thaliana (Mouse-ear cress)).